The primary structure comprises 432 residues: Enolase (432 aa).

Glutamine 167 provides a ligand contact to (2R)-2-phosphoglycerate. Catalysis depends on glutamate 209, which acts as the Proton donor. The Mg(2+) site is built by aspartate 246, glutamate 291, and aspartate 318. The (2R)-2-phosphoglycerate site is built by lysine 343, arginine 372, serine 373, and lysine 394. Residue lysine 343 is the Proton acceptor of the active site.

The protein belongs to the enolase family. In terms of assembly, component of the RNA degradosome, a multiprotein complex involved in RNA processing and mRNA degradation. The cofactor is Mg(2+).

The protein resides in the cytoplasm. Its subcellular location is the secreted. It localises to the cell surface. It catalyses the reaction (2R)-2-phosphoglycerate = phosphoenolpyruvate + H2O. It functions in the pathway carbohydrate degradation; glycolysis; pyruvate from D-glyceraldehyde 3-phosphate: step 4/5. Catalyzes the reversible conversion of 2-phosphoglycerate (2-PG) into phosphoenolpyruvate (PEP). It is essential for the degradation of carbohydrates via glycolysis. This chain is Enolase, found in Aliivibrio fischeri (strain MJ11) (Vibrio fischeri).